Consider the following 320-residue polypeptide: Short-chain dehydrogenase TIC 32 B, chloroplastic (320 aa).

Residues 40–46, 92–93, Asn-119, and Thr-140 contribute to the NADP(+) site; these read GGTSGIG and DL. Ser-174 provides a ligand contact to substrate. The active-site Proton acceptor is Tyr-196. The tract at residues 301-317 is interaction with calmodulin; the sequence is DTTLADKLWDFSIKLVD.

Belongs to the short-chain dehydrogenases/reductases (SDR) family. As to quaternary structure, part of the Tic complex.

The protein resides in the plastid. It is found in the chloroplast inner membrane. Its function is as follows. Involved in protein precursor import into chloroplasts. This Brassica napus (Rape) protein is Short-chain dehydrogenase TIC 32 B, chloroplastic.